The sequence spans 448 residues: N-succinylarginine dihydrolase (448 aa).

Residues 19–28 (GGLSYGNVAS), Asn110, and 137–138 (HR) each bind substrate. Glu174 is an active-site residue. Arg214 lines the substrate pocket. The active site involves His250. 2 residues coordinate substrate: Asp252 and Asn365. Residue Cys371 is the Nucleophile of the active site.

This sequence belongs to the succinylarginine dihydrolase family. In terms of assembly, homodimer.

It carries out the reaction N(2)-succinyl-L-arginine + 2 H2O + 2 H(+) = N(2)-succinyl-L-ornithine + 2 NH4(+) + CO2. Its pathway is amino-acid degradation; L-arginine degradation via AST pathway; L-glutamate and succinate from L-arginine: step 2/5. In terms of biological role, catalyzes the hydrolysis of N(2)-succinylarginine into N(2)-succinylornithine, ammonia and CO(2). The chain is N-succinylarginine dihydrolase from Pseudomonas savastanoi pv. phaseolicola (strain 1448A / Race 6) (Pseudomonas syringae pv. phaseolicola (strain 1448A / Race 6)).